Here is a 516-residue protein sequence, read N- to C-terminus: MDEVGTQERIRIFDTTLRDGEQAPGISLDPLEKLEIAEQLARLGVDIIEAGFPVASQGDFDAVRQIARQVHGPVICGLSRTHVADIERCYEAVRDAEHHRIHVFISTSPSHLEHMLRMSEDQVVEAVRRAIARARELVDDVEFSPQDATRTPLPFLYRVLQVAVDEGASTLNIPDTVGYGIPWDFARMVESVRREVAGSYVISCHCHNDLGLATANSLAAVAAGARQVECCINGIGERAGNAALEEVVMGLAIRSDVIGDVTTGIDTRELARTSRLVSRLTGYPVQYNKAVVGRNAFAHESGIHQHGVLTDRSTYEVIDAASVGQEAAQIVLGKHSGRHAFQEALARMGIALEGDALNATFQRFKELADRKVELSEADLEAIVAEELGTTLADRFELVSFRVEAGTGREAVASATVLVDGTPVEASASGNGMVDALGRVLAEATALEARLTGFSVTSVTGGADALGSVAVTVDVGGHEVSGRGVSTDIVEASARALLNALNRAARVREKASNRETP.

The Pyruvate carboxyltransferase domain occupies 10–271 (IRIFDTTLRD…TTGIDTRELA (262 aa)). Mn(2+)-binding residues include Asp-19, His-205, His-207, and Asn-241. Residues 396–516 (ELVSFRVEAG…REKASNRETP (121 aa)) are regulatory domain.

Belongs to the alpha-IPM synthase/homocitrate synthase family. LeuA type 1 subfamily. As to quaternary structure, homodimer. It depends on Mn(2+) as a cofactor.

It is found in the cytoplasm. The catalysed reaction is 3-methyl-2-oxobutanoate + acetyl-CoA + H2O = (2S)-2-isopropylmalate + CoA + H(+). It functions in the pathway amino-acid biosynthesis; L-leucine biosynthesis; L-leucine from 3-methyl-2-oxobutanoate: step 1/4. Its function is as follows. Catalyzes the condensation of the acetyl group of acetyl-CoA with 3-methyl-2-oxobutanoate (2-ketoisovalerate) to form 3-carboxy-3-hydroxy-4-methylpentanoate (2-isopropylmalate). The chain is 2-isopropylmalate synthase from Acidimicrobium ferrooxidans (strain DSM 10331 / JCM 15462 / NBRC 103882 / ICP).